The following is a 180-amino-acid chain: ATP synthase subunit delta (180 aa).

It belongs to the ATPase delta chain family. In terms of assembly, F-type ATPases have 2 components, F(1) - the catalytic core - and F(0) - the membrane proton channel. F(1) has five subunits: alpha(3), beta(3), gamma(1), delta(1), epsilon(1). CF(0) has four main subunits: a(1), b(1), b'(1) and c(10-14). The alpha and beta chains form an alternating ring which encloses part of the gamma chain. F(1) is attached to F(0) by a central stalk formed by the gamma and epsilon chains, while a peripheral stalk is formed by the delta, b and b' chains.

It localises to the cellular thylakoid membrane. F(1)F(0) ATP synthase produces ATP from ADP in the presence of a proton or sodium gradient. F-type ATPases consist of two structural domains, F(1) containing the extramembraneous catalytic core and F(0) containing the membrane proton channel, linked together by a central stalk and a peripheral stalk. During catalysis, ATP synthesis in the catalytic domain of F(1) is coupled via a rotary mechanism of the central stalk subunits to proton translocation. In terms of biological role, this protein is part of the stalk that links CF(0) to CF(1). It either transmits conformational changes from CF(0) to CF(1) or is implicated in proton conduction. The sequence is that of ATP synthase subunit delta from Prochlorococcus marinus (strain AS9601).